The primary structure comprises 1480 residues: Cystic fibrosis transmembrane conductance regulator (1480 aa).

Residues 1–77 (MQRSPLEKAS…KLINALRRCF (77 aa)) lie on the Cytoplasmic side of the membrane. A helical membrane pass occupies residues 78 to 98 (FWRFMFYGIFLYLGEVTKAVQ). The ABC transmembrane type-1 1 domain maps to 81–365 (FMFYGIFLYL…WAVQTWYDSL (285 aa)). Over 99 to 122 (PLLLGRIIASYDPDNKEERSIAIY) the chain is Extracellular. A helical transmembrane segment spans residues 123-146 (LGIGLCLLFIVRTLLLHPAIFGLH). Residues 147–195 (HIGMQMRIAMFSLIYKKTLKLSSRVLDKISIGQLVSLLSNNLNKFDEGL) are Cytoplasmic-facing. The chain crosses the membrane as a helical span at residues 196–216 (ALAHFVWIAPLQVALLMGLIW). Residues 217 to 222 (ELLQAS) are Extracellular-facing. The chain crosses the membrane as a helical span at residues 223 to 243 (AFCGLGFLIVLALFQAGLGRM). Over 244–298 (MMKYRDQRAGKISERLVITSEMIENIQSVKAYCWEEAMEKMIENLRQTELKLTRK) the chain is Cytoplasmic. Residues 299-319 (AAYVRYFNSSAFFFSGFFVVF) form a helical membrane-spanning segment. Over 320-339 (LSVLPYALIKGIILRKIFTT) the chain is Extracellular. A helical membrane pass occupies residues 340 to 358 (ISFCIVLRMAVTRQFPWAV). Topologically, residues 359–858 (QTWYDSLGAI…YLRYITVHKS (500 aa)) are cytoplasmic. Residues W401, S434, 458–465 (GSTGAGKT), and Q493 each bind ATP. In terms of domain architecture, ABC transporter 1 spans 423–646 (NGDDSLFFSN…QPDFSSKLMG (224 aa)). Residue C524 is the site of S-palmitoyl cysteine attachment. The residue at position 549 (S549) is a Phosphoserine. The disordered R region stretch occupies residues 654–831 (SAERRNSILT…EEINEEDLKE (178 aa)). Residues S660 and S670 each carry the phosphoserine; by PKA modification. S686 carries the phosphoserine; by PKC modification. A Glycyl lysine isopeptide (Lys-Gly) (interchain with G-Cter in ubiquitin) cross-link involves residue K688. 2 positions are modified to phosphoserine; by PKA: S700 and S712. Phosphothreonine is present on T717. Phosphoserine; by PKA occurs at positions 737, 753, and 768. S790 is subject to Phosphoserine; by PKC. Phosphoserine; by PKA is present on residues S795 and S813. Residues 859–879 (LIFVLIWCLVIFLAEVAASLV) form a helical membrane-spanning segment. One can recognise an ABC transmembrane type-1 2 domain in the interval 859–1155 (LIFVLIWCLV…AVNSSIDVDS (297 aa)). At 880-918 (VLWLLGNTPLQDKGNSTHSRNNSYAVIITSTSSYYVFYI) the chain is on the extracellular side. N-linked (GlcNAc...) asparagine glycans are attached at residues N894 and N900. A discontinuously helical membrane pass occupies residues 919 to 939 (YVGVADTLLAMGFFRGLPLVH). Residues 940 to 990 (TLITVSKILHHKMLHSVLQAPMSTLNTLKAGGILNRFSKDIAILDDLLPLT) lie on the Cytoplasmic side of the membrane. The helical transmembrane segment at 991-1011 (IFDFIQLLLIVIGAIAVVAVL) threads the bilayer. Residues 1012–1013 (QP) lie on the Extracellular side of the membrane. The helical transmembrane segment at 1014 to 1034 (YIFVATVPVIVAFIMLRAYFL) threads the bilayer. Over 1035 to 1095 (QTSQQLKQLE…TANWFLYLST (61 aa)) the chain is Cytoplasmic. Residues 1096–1116 (LRWFQMRIEMIFVIFFIAVTF) form a helical membrane-spanning segment. The Extracellular segment spans residues 1117–1130 (ISILTTGEGEGRVG). Residues 1131–1151 (IILTLAMNIMSTLQWAVNSSI) traverse the membrane as a helical segment. Residues 1152 to 1480 (DVDSLMRSVS…TEEEVQDTRL (329 aa)) lie on the Cytoplasmic side of the membrane. In terms of domain architecture, ABC transporter 2 spans 1210 to 1443 (MTVKDLTAKY…RSLFRQAISP (234 aa)). ATP contacts are provided by residues Y1219 and 1244 to 1251 (GRTGSGKS). Residues 1386–1480 (RTLKQAFADC…TEEEVQDTRL (95 aa)) form an interaction with GORASP2 region. C1395 carries the S-palmitoyl cysteine lipid modification. Residues S1444 and S1456 each carry the phosphoserine modification. The segment at 1452–1480 (HRNSSKCKSKPQIAALKEETEEEVQDTRL) is disordered. Residues 1470-1480 (ETEEEVQDTRL) are compositionally biased toward acidic residues. The PDZ-binding signature appears at 1478–1480 (TRL).

The protein belongs to the ABC transporter superfamily. ABCC family. CFTR transporter (TC 3.A.1.202) subfamily. Monomer; does not require oligomerization for channel activity. May form oligomers in the membrane. Interacts with SLC26A3, SLC26A6 and SHANK2. Interacts with NHERF1 and MYO6. Interacts (via C-terminus) with GOPC (via PDZ domain); this promotes CFTR internalization and thereby decreases channel activity. Interacts with SLC4A7 through NHERF1. Found in a complex with MYO5B and RAB11A. Interacts with ANO1. Interacts with SLC26A8. Interacts with AHCYL1; the interaction increases CFTR activity. Interacts with CSE1L. The core-glycosylated form interacts with GORASP2 (via PDZ GRASP-type 1 domain) in respone to ER stress. Interacts with MARCHF2; the interaction leads to CFTR ubiqtuitination and degradation. Interacts with ADGRG2. N-glycosylated. In terms of processing, phosphorylated; cAMP treatment promotes phosphorylation and activates the channel. Dephosphorylation decreases the ATPase activity (in vitro). Phosphorylation at PKA sites activates the channel. Phosphorylation at PKC sites enhances the response to phosphorylation by PKA. Phosphorylated by AMPK; this inhibits channel activity. Post-translationally, ubiquitinated, leading to its degradation in the lysosome. Deubiquitination by USP10 in early endosomes enhances its endocytic recycling to the cell membrane. Ubiquitinated by RNF185 during ER stress. Ubiquitinated by MARCHF2. In terms of tissue distribution, expressed in the respiratory airway, including bronchial epithelium, and in the female reproductive tract, including oviduct (at protein level). Detected in pancreatic intercalated ducts in the exocrine tissue, on epithelial cells in intralobular striated ducts in sublingual salivary glands, on apical membranes of crypt cells throughout the small and large intestine, and on the reabsorptive duct in eccrine sweat glands. Detected on the equatorial segment of the sperm head (at protein level). Detected in nasal and bronchial superficial epithelium. Expressed by the central cells on the sebaceous glands, dermal adipocytes and, at lower levels, by epithelial cells.

The protein localises to the apical cell membrane. It localises to the early endosome membrane. The protein resides in the cell membrane. Its subcellular location is the recycling endosome membrane. It is found in the endoplasmic reticulum membrane. The protein localises to the nucleus. The catalysed reaction is ATP + H2O + closed Cl(-) channel = ADP + phosphate + open Cl(-) channel.. The enzyme catalyses chloride(in) = chloride(out). It carries out the reaction hydrogencarbonate(in) = hydrogencarbonate(out). It catalyses the reaction ATP + H2O = ADP + phosphate + H(+). Its function is as follows. Epithelial ion channel that plays an important role in the regulation of epithelial ion and water transport and fluid homeostasis. Mediates the transport of chloride ions across the cell membrane. Possesses an intrinsic ATPase activity and utilizes ATP to gate its channel; the passive flow of anions through the channel is gated by cycles of ATP binding and hydrolysis by the ATP-binding domains. The ion channel is also permeable to HCO(3)(-); selectivity depends on the extracellular chloride concentration. In vitro, mediates ATP-dependent glutathione flux. Exerts its function also by modulating the activity of other ion channels and transporters. Plays an important role in airway fluid homeostasis. Contributes to the regulation of the pH and the ion content of the airway surface fluid layer and thereby plays an important role in defense against pathogens. Modulates the activity of the epithelial sodium channel (ENaC) complex, in part by regulating the cell surface expression of the ENaC complex. Inhibits the activity of the ENaC channel containing subunits SCNN1A, SCNN1B and SCNN1G. Inhibits the activity of the ENaC channel containing subunits SCNN1D, SCNN1B and SCNN1G, but not of the ENaC channel containing subunits SCNN1A, SCNN1B and SCNN1G. May regulate bicarbonate secretion and salvage in epithelial cells by regulating the transporter SLC4A7. Can inhibit the chloride channel activity of ANO1. Plays a role in the chloride and bicarbonate homeostasis during sperm epididymal maturation and capacitation. This is Cystic fibrosis transmembrane conductance regulator from Homo sapiens (Human).